Reading from the N-terminus, the 142-residue chain is Large ribosomal subunit protein uL11 (142 aa).

The protein belongs to the universal ribosomal protein uL11 family. As to quaternary structure, part of the ribosomal stalk of the 50S ribosomal subunit. Interacts with L10 and the large rRNA to form the base of the stalk. L10 forms an elongated spine to which L12 dimers bind in a sequential fashion forming a multimeric L10(L12)X complex. One or more lysine residues are methylated.

Functionally, forms part of the ribosomal stalk which helps the ribosome interact with GTP-bound translation factors. The protein is Large ribosomal subunit protein uL11 of Pasteurella multocida (strain Pm70).